A 226-amino-acid chain; its full sequence is 7-cyano-7-deazaguanine synthase (226 aa).

Residue 8–18 coordinates ATP; it reads LSGGLDSTTTL. 4 residues coordinate Zn(2+): cysteine 188, cysteine 198, cysteine 201, and cysteine 204.

This sequence belongs to the QueC family. Zn(2+) serves as cofactor.

It carries out the reaction 7-carboxy-7-deazaguanine + NH4(+) + ATP = 7-cyano-7-deazaguanine + ADP + phosphate + H2O + H(+). It functions in the pathway purine metabolism; 7-cyano-7-deazaguanine biosynthesis. Catalyzes the ATP-dependent conversion of 7-carboxy-7-deazaguanine (CDG) to 7-cyano-7-deazaguanine (preQ(0)). The sequence is that of 7-cyano-7-deazaguanine synthase from Nitrosomonas eutropha (strain DSM 101675 / C91 / Nm57).